The primary structure comprises 159 residues: MNISIITVGKLKEKYLKQGIAEYTKRLSAYAKVQEIEVSDEKAPEHLSEADMLLVKQKEGERILAKISPDTHVIALAIKGKQRTSEEFARELDQLATYGKSKIAFVIGGSLGLSDDVMKRADDTISFSKMTFPHQLMKLVLCEQIYRAYRINRNEPYHK.

Residues leucine 76, glycine 108, and phenylalanine 127 to phenylalanine 132 contribute to the S-adenosyl-L-methionine site.

This sequence belongs to the RNA methyltransferase RlmH family. Homodimer.

Its subcellular location is the cytoplasm. The enzyme catalyses pseudouridine(1915) in 23S rRNA + S-adenosyl-L-methionine = N(3)-methylpseudouridine(1915) in 23S rRNA + S-adenosyl-L-homocysteine + H(+). In terms of biological role, specifically methylates the pseudouridine at position 1915 (m3Psi1915) in 23S rRNA. This is Ribosomal RNA large subunit methyltransferase H from Exiguobacterium sp. (strain ATCC BAA-1283 / AT1b).